The chain runs to 447 residues: Glucose-6-phosphate isomerase (447 aa).

The Proton donor role is filled by Glu-287. Catalysis depends on residues His-308 and Lys-422.

Belongs to the GPI family.

It localises to the cytoplasm. It carries out the reaction alpha-D-glucose 6-phosphate = beta-D-fructose 6-phosphate. Its pathway is carbohydrate biosynthesis; gluconeogenesis. It participates in carbohydrate degradation; glycolysis; D-glyceraldehyde 3-phosphate and glycerone phosphate from D-glucose: step 2/4. Functionally, catalyzes the reversible isomerization of glucose-6-phosphate to fructose-6-phosphate. The protein is Glucose-6-phosphate isomerase of Heliobacterium modesticaldum (strain ATCC 51547 / Ice1).